A 76-amino-acid polypeptide reads, in one-letter code: Esculentin-2MT1 (76 aa).

An N-terminal signal peptide occupies residues 1 to 22 (MFTMKKPLLLLFFLGTISLSLC). Positions 23-37 (EEERNADEDDGEKEV) are excised as a propeptide. Cysteines 70 and 76 form a disulfide.

It belongs to the frog skin active peptide (FSAP) family. Esculentin subfamily. Expressed by the skin glands.

Its subcellular location is the secreted. In terms of biological role, antimicrobial peptide. The protein is Esculentin-2MT1 of Amolops mantzorum (Sichuan torrent frog).